Reading from the N-terminus, the 162-residue chain is 2-C-methyl-D-erythritol 2,4-cyclodiphosphate synthase (162 aa).

The a divalent metal cation site is built by aspartate 12 and histidine 14. 4-CDP-2-C-methyl-D-erythritol 2-phosphate is bound by residues 12 to 14 (DVH) and 38 to 39 (HS). Residue histidine 46 participates in a divalent metal cation binding. 4-CDP-2-C-methyl-D-erythritol 2-phosphate-binding positions include 60–62 (DIG), 65–69 (FPDTD), and arginine 146.

Belongs to the IspF family. In terms of assembly, homotrimer. Requires a divalent metal cation as cofactor.

It catalyses the reaction 4-CDP-2-C-methyl-D-erythritol 2-phosphate = 2-C-methyl-D-erythritol 2,4-cyclic diphosphate + CMP. Its pathway is isoprenoid biosynthesis; isopentenyl diphosphate biosynthesis via DXP pathway; isopentenyl diphosphate from 1-deoxy-D-xylulose 5-phosphate: step 4/6. Functionally, involved in the biosynthesis of isopentenyl diphosphate (IPP) and dimethylallyl diphosphate (DMAPP), two major building blocks of isoprenoid compounds. Catalyzes the conversion of 4-diphosphocytidyl-2-C-methyl-D-erythritol 2-phosphate (CDP-ME2P) to 2-C-methyl-D-erythritol 2,4-cyclodiphosphate (ME-CPP) with a corresponding release of cytidine 5-monophosphate (CMP). The protein is 2-C-methyl-D-erythritol 2,4-cyclodiphosphate synthase of Bordetella bronchiseptica (strain ATCC BAA-588 / NCTC 13252 / RB50) (Alcaligenes bronchisepticus).